The primary structure comprises 149 residues: Protein-export protein SecB 2 (149 aa).

This sequence belongs to the SecB family. As to quaternary structure, homotetramer, a dimer of dimers. One homotetramer interacts with 1 SecA dimer.

Its subcellular location is the cytoplasm. Functionally, one of the proteins required for the normal export of preproteins out of the cell cytoplasm. It is a molecular chaperone that binds to a subset of precursor proteins, maintaining them in a translocation-competent state. It also specifically binds to its receptor SecA. This chain is Protein-export protein SecB 2, found in Francisella tularensis subsp. tularensis (strain FSC 198).